We begin with the raw amino-acid sequence, 415 residues long: Phosphoglycerate kinase (415 aa).

The (2R)-3-phosphoglycerate site is built by Val-22, Asp-23, Phe-24, Asn-25, Gln-37, Arg-38, Ser-61, His-62, Gly-64, Arg-65, Arg-121, His-168, and Arg-169. Gly-212 contacts ADP. CDP is bound at residue Gly-212. The AMP site is built by Ala-213 and Lys-214. Ala-213 serves as a coordination point for ATP. Ala-213 is a binding site for Mg(2+). 2 residues coordinate Mg(2+): Ala-216 and Asp-217. Asp-217 contributes to the CDP binding site. Lys-218 lines the AMP pocket. Residue Lys-218 coordinates ATP. Gly-236 serves as a coordination point for ADP. A CDP-binding site is contributed by Gly-236. 2 residues coordinate AMP: Gly-237 and Gly-311. Residues Gly-237 and Gly-311 each contribute to the ATP site. Residues Gly-336 and Phe-341 each coordinate CDP. Phe-341 contributes to the ADP binding site. Residue Glu-342 participates in AMP binding. Residues Glu-342, Asp-373, and Thr-374 each contribute to the ATP site. Asp-373 serves as a coordination point for Mg(2+).

The protein belongs to the phosphoglycerate kinase family. In terms of assembly, monomer. Requires Mg(2+) as cofactor.

The protein localises to the cytoplasm. It catalyses the reaction (2R)-3-phosphoglycerate + ATP = (2R)-3-phospho-glyceroyl phosphate + ADP. Its pathway is carbohydrate degradation; glycolysis; pyruvate from D-glyceraldehyde 3-phosphate: step 2/5. Functionally, enzyme of the glycolytic pathway. Glycolysis is essential in glial cells but not in neurons; neurons rely on the citric acid cycle for their energy needs, and on lactate and alanine secreted into the hemolymph by glial cells to fuel it. This is Phosphoglycerate kinase from Drosophila melanogaster (Fruit fly).